We begin with the raw amino-acid sequence, 433 residues long: Serine--tRNA ligase (433 aa).

235-237 (TSE) serves as a coordination point for L-serine. 266 to 268 (RSE) is an ATP binding site. L-serine is bound at residue E289. Residue 353 to 356 (EISS) participates in ATP binding. S388 lines the L-serine pocket.

It belongs to the class-II aminoacyl-tRNA synthetase family. Type-1 seryl-tRNA synthetase subfamily. In terms of assembly, homodimer. The tRNA molecule binds across the dimer.

The protein localises to the cytoplasm. It carries out the reaction tRNA(Ser) + L-serine + ATP = L-seryl-tRNA(Ser) + AMP + diphosphate + H(+). It catalyses the reaction tRNA(Sec) + L-serine + ATP = L-seryl-tRNA(Sec) + AMP + diphosphate + H(+). It functions in the pathway aminoacyl-tRNA biosynthesis; selenocysteinyl-tRNA(Sec) biosynthesis; L-seryl-tRNA(Sec) from L-serine and tRNA(Sec): step 1/1. Functionally, catalyzes the attachment of serine to tRNA(Ser). Is also able to aminoacylate tRNA(Sec) with serine, to form the misacylated tRNA L-seryl-tRNA(Sec), which will be further converted into selenocysteinyl-tRNA(Sec). The sequence is that of Serine--tRNA ligase from Burkholderia cepacia (Pseudomonas cepacia).